The following is a 394-amino-acid chain: NAD(P)H-quinone oxidoreductase subunit H (394 aa).

Belongs to the complex I 49 kDa subunit family. As to quaternary structure, NDH-1 can be composed of about 15 different subunits; different subcomplexes with different compositions have been identified which probably have different functions.

It is found in the cellular thylakoid membrane. It catalyses the reaction a plastoquinone + NADH + (n+1) H(+)(in) = a plastoquinol + NAD(+) + n H(+)(out). It carries out the reaction a plastoquinone + NADPH + (n+1) H(+)(in) = a plastoquinol + NADP(+) + n H(+)(out). Functionally, NDH-1 shuttles electrons from an unknown electron donor, via FMN and iron-sulfur (Fe-S) centers, to quinones in the respiratory and/or the photosynthetic chain. The immediate electron acceptor for the enzyme in this species is believed to be plastoquinone. Couples the redox reaction to proton translocation, and thus conserves the redox energy in a proton gradient. Cyanobacterial NDH-1 also plays a role in inorganic carbon-concentration. This chain is NAD(P)H-quinone oxidoreductase subunit H, found in Synechococcus sp. (strain ATCC 27144 / PCC 6301 / SAUG 1402/1) (Anacystis nidulans).